The sequence spans 86 residues: Cell division topological specificity factor (86 aa).

It belongs to the MinE family.

Its function is as follows. Prevents the cell division inhibition by proteins MinC and MinD at internal division sites while permitting inhibition at polar sites. This ensures cell division at the proper site by restricting the formation of a division septum at the midpoint of the long axis of the cell. The sequence is that of Cell division topological specificity factor from Rhizobium rhizogenes (strain K84 / ATCC BAA-868) (Agrobacterium radiobacter).